The sequence spans 387 residues: Succinate--CoA ligase [ADP-forming] subunit beta (387 aa).

One can recognise an ATP-grasp domain in the interval 9–236 (KGLFAKHNVP…RAATDPLELK (228 aa)). ATP is bound by residues Lys-45, 52 to 54 (GRG), Ser-94, and Glu-99. Asn-191 and Asp-205 together coordinate Mg(2+). Substrate-binding positions include Asn-256 and 318 to 320 (GIT).

The protein belongs to the succinate/malate CoA ligase beta subunit family. In terms of assembly, heterotetramer of two alpha and two beta subunits. Mg(2+) is required as a cofactor.

It catalyses the reaction succinate + ATP + CoA = succinyl-CoA + ADP + phosphate. The enzyme catalyses GTP + succinate + CoA = succinyl-CoA + GDP + phosphate. Its pathway is carbohydrate metabolism; tricarboxylic acid cycle; succinate from succinyl-CoA (ligase route): step 1/1. Its function is as follows. Succinyl-CoA synthetase functions in the citric acid cycle (TCA), coupling the hydrolysis of succinyl-CoA to the synthesis of either ATP or GTP and thus represents the only step of substrate-level phosphorylation in the TCA. The beta subunit provides nucleotide specificity of the enzyme and binds the substrate succinate, while the binding sites for coenzyme A and phosphate are found in the alpha subunit. The polypeptide is Succinate--CoA ligase [ADP-forming] subunit beta (Mycobacterium ulcerans (strain Agy99)).